An 860-amino-acid polypeptide reads, in one-letter code: DNA mismatch repair protein MutS (860 aa).

618-625 contacts ATP; sequence GPNMGGKS.

The protein belongs to the DNA mismatch repair MutS family.

Functionally, this protein is involved in the repair of mismatches in DNA. It is possible that it carries out the mismatch recognition step. This protein has a weak ATPase activity. The chain is DNA mismatch repair protein MutS from Shewanella piezotolerans (strain WP3 / JCM 13877).